Consider the following 181-residue polypeptide: Oligoribonuclease (181 aa).

The 164-residue stretch at 8–171 folds into the Exonuclease domain; sequence LIWIDLEMTG…LDIQESIAEL (164 aa). Y129 is a catalytic residue.

This sequence belongs to the oligoribonuclease family.

The protein resides in the cytoplasm. In terms of biological role, 3'-to-5' exoribonuclease specific for small oligoribonucleotides. The sequence is that of Oligoribonuclease from Shewanella amazonensis (strain ATCC BAA-1098 / SB2B).